A 560-amino-acid chain; its full sequence is Choline/ethanolamine transporter FLVCR1 (560 aa).

The segment at 1-43 (MARPDDEVGPAVAPGHPLGKGYLPVPKGAPDGEARLVPQNGPE) is disordered. Residues 1–92 (MARPDDEVGP…EDVPCPACPP (92 aa)) lie on the Cytoplasmic side of the membrane. A helical membrane pass occupies residues 93–117 (RTALSPRRFVVLLIFSLYSLVNAFQ). Over 118–135 (WIQYSSISNVFEDFYEVS) the chain is Extracellular. The helical transmembrane segment at 136–163 (PLHINWLSMVYMVAYVPLIFPATWLLDT) threads the bilayer. The Cytoplasmic segment spans residues 164–165 (RG). Residues 166-185 (LRLTALLGSGLNCLGAWVKC) traverse the membrane as a helical segment. Residues 186–192 (GSVQRHL) lie on the Extracellular side of the membrane. Residues 193–221 (FWVTMLGQILCSVAQVFILGLPSPVASVW) traverse the membrane as a helical segment. Gln207 serves as a coordination point for ethanolamine. The Cytoplasmic portion of the chain corresponds to 222 to 226 (FGPKE). Residues 227 to 252 (VSTACATAVLGNQLGTAVGFLLPPVL) form a helical membrane-spanning segment. At 253 to 270 (VPALGTQNSTGLLAHTQN) the chain is on the extracellular side. N-linked (GlcNAc...) asparagine glycosylation occurs at Asn270. Residues 271 to 300 (NTDLLAHNINTMFYGTAFISTFLFFLTIIA) traverse the membrane as a helical segment. Topologically, residues 301–336 (FKEKPPLPPSQAQAVLRDSPPEEYSYKSSIWNLCRN) are cytoplasmic. Residues 337–367 (IPFVLLLVSYGIMTGAFYSISTLLNQIILTY) form a helical membrane-spanning segment. Residues 368-371 (YVGE) are Extracellular-facing. A helical membrane pass occupies residues 372-400 (EVNAGRIGLTLVVAGMVGSILCGLWLDYT). Topologically, residues 401–402 (KT) are cytoplasmic. Residues 403–425 (YKQTTLIVYVLSFIGMLIFTFTL) form a helical membrane-spanning segment. Topologically, residues 426 to 428 (NLG) are extracellular. The helical transmembrane segment at 429–458 (YIIVVFFTGGILGFFMTGYLPLGFEFAVEI) threads the bilayer. Residues 459 to 466 (TYPESEGM) lie on the Cytoplasmic side of the membrane. Residues 467–492 (SSGLLNTAAQILGIFFTLAQGKITTD) traverse the membrane as a helical segment. Gln476 serves as a coordination point for ethanolamine. Residue Gln476 participates in choline binding. Residues 493-495 (YNS) lie on the Extracellular side of the membrane. The chain crosses the membrane as a helical span at residues 496–518 (PEAGNIFLCAWMFVGIILTALIK). Topologically, residues 519 to 560 (SDLRRHNINTGLTNIDVKAVPVDSRVDPKPKVMVSIQSESSL) are cytoplasmic. Ser542 is subject to Phosphoserine.

The protein belongs to the major facilitator superfamily. Feline leukemia virus subgroup C receptor (TC 2.A.1.28.1) family.

Its subcellular location is the cell membrane. It is found in the mitochondrion membrane. It catalyses the reaction choline(out) = choline(in). The catalysed reaction is ethanolamine(in) = ethanolamine(out). The enzyme catalyses heme b(in) = heme b(out). Functionally, uniporter that mediates the transport of extracellular choline and ethanolamine into cells, thereby playing a key role in phospholipid biosynthesis. Choline and ethanolamine are the precursors of phosphatidylcholine and phosphatidylethanolamine, respectively, the two most abundant phospholipids. Transport is not coupled with proton transport and is exclusively driven by the choline (or ethanolamine) gradient across the plasma membrane. Also acts as a heme b transporter that mediates heme efflux from the cytoplasm to the extracellular compartment. In terms of biological role, uniporter that mediates the transport of extracellular choline and ethanolamine into cells. Choline and ethanolamine are the precursors of phosphatidylcholine and phosphatidylethanolamine, respectively, the two most abundant phospholipids. Transport is not coupled with proton transport and is exclusively driven by the choline (or ethanolamine) gradient across the plasma membrane. Also acts as a heme b transporter that mediates heme efflux from the cytoplasm to the extracellular compartment. Heme export depends on the presence of HPX and is required to maintain intracellular free heme balance, protecting cells from heme toxicity. Heme export provides protection from heme or ferrous iron toxicities in liver, brain, sensory neurons and during erythropoiesis, a process in which heme synthesis intensifies. Possibly export coproporphyrin and protoporphyrin IX, which are both intermediate products in the heme biosynthetic pathway. Does not export bilirubin. The molecular mechanism of heme transport, whether electrogenic, electroneutral or coupled to other ions, remains to be elucidated. Heme transporter that promotes heme efflux from the mitochondrion to the cytoplasm. Essential for erythroid differentiation. The sequence is that of Choline/ethanolamine transporter FLVCR1 (Flvcr1) from Mus musculus (Mouse).